The sequence spans 211 residues: Rho-related GTP-binding protein RhoF (211 aa).

Position 1 is an N-acetylmethionine (methionine 1). 26 to 33 (GDGGCGKT) is a GTP binding site. Positions 48–56 (YAPSVFEKY) match the Effector region motif. GTP contacts are provided by residues 73–77 (DTAGQ) and 131–134 (CKTD). Cysteine methyl ester is present on cysteine 208. The S-geranylgeranyl cysteine moiety is linked to residue cysteine 208. A propeptide spans 209 to 211 (LLL) (removed in mature form).

Belongs to the small GTPase superfamily. Rho family.

Its subcellular location is the cell membrane. It is found in the cytoplasm. It localises to the cytoskeleton. Functionally, plasma membrane-associated small GTPase which cycles between an active GTP-bound and an inactive GDP-bound state. Causes the formation of thin, actin-rich surface projections called filopodia. Functions cooperatively with CDC42 and Rac to generate additional structures, increasing the diversity of actin-based morphology. This Mus musculus (Mouse) protein is Rho-related GTP-binding protein RhoF (Rhof).